The following is a 156-amino-acid chain: UPF0251 protein Sfum_2819 (156 aa).

This sequence belongs to the UPF0251 family.

In Syntrophobacter fumaroxidans (strain DSM 10017 / MPOB), this protein is UPF0251 protein Sfum_2819.